Here is a 95-residue protein sequence, read N- to C-terminus: Aspartyl/glutamyl-tRNA(Asn/Gln) amidotransferase subunit C (95 aa).

The protein belongs to the GatC family. In terms of assembly, heterotrimer of A, B and C subunits.

The catalysed reaction is L-glutamyl-tRNA(Gln) + L-glutamine + ATP + H2O = L-glutaminyl-tRNA(Gln) + L-glutamate + ADP + phosphate + H(+). The enzyme catalyses L-aspartyl-tRNA(Asn) + L-glutamine + ATP + H2O = L-asparaginyl-tRNA(Asn) + L-glutamate + ADP + phosphate + 2 H(+). In terms of biological role, allows the formation of correctly charged Asn-tRNA(Asn) or Gln-tRNA(Gln) through the transamidation of misacylated Asp-tRNA(Asn) or Glu-tRNA(Gln) in organisms which lack either or both of asparaginyl-tRNA or glutaminyl-tRNA synthetases. The reaction takes place in the presence of glutamine and ATP through an activated phospho-Asp-tRNA(Asn) or phospho-Glu-tRNA(Gln). The chain is Aspartyl/glutamyl-tRNA(Asn/Gln) amidotransferase subunit C from Methylobacterium nodulans (strain LMG 21967 / CNCM I-2342 / ORS 2060).